We begin with the raw amino-acid sequence, 74 residues long: Large ribosomal subunit protein bL31 (74 aa).

This sequence belongs to the bacterial ribosomal protein bL31 family. Type A subfamily. Part of the 50S ribosomal subunit.

Binds the 23S rRNA. The polypeptide is Large ribosomal subunit protein bL31 (Xanthobacter autotrophicus (strain ATCC BAA-1158 / Py2)).